The chain runs to 417 residues: Queuine tRNA-ribosyltransferase accessory subunit 2 (417 aa).

Cys324, Cys326, Cys329, and His355 together coordinate Zn(2+).

It belongs to the queuine tRNA-ribosyltransferase family. QTRT2 subfamily. In terms of assembly, heterodimer of a catalytic subunit and an accessory subunit. Zn(2+) is required as a cofactor.

The protein resides in the cytoplasm. Its function is as follows. Non-catalytic subunit of the queuine tRNA-ribosyltransferase (TGT) that catalyzes the base-exchange of a guanine (G) residue with queuine (Q) at position 34 (anticodon wobble position) in tRNAs with GU(N) anticodons (tRNA-Asp, -Asn, -His and -Tyr), resulting in the hypermodified nucleoside queuosine (7-(((4,5-cis-dihydroxy-2-cyclopenten-1-yl)amino)methyl)-7-deazaguanosine). The protein is Queuine tRNA-ribosyltransferase accessory subunit 2 of Drosophila pseudoobscura pseudoobscura (Fruit fly).